The sequence spans 135 residues: ATP synthase epsilon chain (135 aa).

It belongs to the ATPase epsilon chain family. In terms of assembly, F-type ATPases have 2 components, CF(1) - the catalytic core - and CF(0) - the membrane proton channel. CF(1) has five subunits: alpha(3), beta(3), gamma(1), delta(1), epsilon(1). CF(0) has three main subunits: a, b and c.

It is found in the cell inner membrane. In terms of biological role, produces ATP from ADP in the presence of a proton gradient across the membrane. The protein is ATP synthase epsilon chain of Brucella abortus (strain S19).